A 431-amino-acid polypeptide reads, in one-letter code: Levansucrase LscC (431 aa).

Sucrose-binding residues include Trp-61, Asp-62, Ala-148, Arg-218, and Asp-219. Asp-62 acts as the Nucleophile in catalysis. Glu-303 (proton donor/acceptor) is an active-site residue.

The protein belongs to the glycosyl hydrolase 68 family.

The protein localises to the periplasm. The catalysed reaction is [6)-beta-D-fructofuranosyl-(2-&gt;](n) alpha-D-glucopyranoside + sucrose = [6)-beta-D-fructofuranosyl-(2-&gt;](n+1) alpha-D-glucopyranoside + D-glucose. Catalyzes the synthesis of levan, a fructose polymer, by transferring the fructosyl moiety from sucrose to a growing acceptor molecule. The chain is Levansucrase LscC from Pseudomonas savastanoi pv. glycinea (Pseudomonas syringae pv. glycinea).